Here is a 146-residue protein sequence, read N- to C-terminus: MQVILLEPGRLGKTGDVVNVKPGYARNWLIPQGIAAPATASNMKTLEAQVRARKKQQEREKAQAEDLASRLNGVAVELSVRAGEGKIYGAVTHADVADALDKLGFDVDRRRIEMPKTVKEIGEYDIAYRAHPEVTIPMKLVVHAQK.

It belongs to the bacterial ribosomal protein bL9 family.

Functionally, binds to the 23S rRNA. The polypeptide is Large ribosomal subunit protein bL9 (Deinococcus geothermalis (strain DSM 11300 / CIP 105573 / AG-3a)).